The chain runs to 244 residues: Uridylate kinase (244 aa).

17-20 lines the ATP pocket; sequence KVSG. Residues 25–30 are involved in allosteric activation by GTP; that stretch reads GDKGFG. G59 is a UMP binding site. G60 and R64 together coordinate ATP. UMP is bound by residues D80 and 141 to 148; that span reads VGNPFFTT. ATP-binding residues include T168, Q169, Y174, and D177.

Belongs to the UMP kinase family. In terms of assembly, homohexamer.

The protein resides in the cytoplasm. The catalysed reaction is UMP + ATP = UDP + ADP. It participates in pyrimidine metabolism; CTP biosynthesis via de novo pathway; UDP from UMP (UMPK route): step 1/1. With respect to regulation, allosterically activated by GTP. Inhibited by UTP. Functionally, catalyzes the reversible phosphorylation of UMP to UDP. The polypeptide is Uridylate kinase (Ehrlichia ruminantium (strain Welgevonden)).